A 548-amino-acid polypeptide reads, in one-letter code: Chaperone Ric-8A (548 aa).

2 disordered regions span residues 443–484 (DPGH…EGMT) and 517–548 (GKMT…SDTN).

Belongs to the synembryn family.

It localises to the cytoplasm. The protein resides in the cell cortex. Functionally, chaperone that specifically binds and folds nascent G alpha proteins prior to G protein heterotrimer formation, promoting their stability and activity: folds GNAI1, GNAO1, GNA13 and GNAQ. Does not fold G(s) G-alpha proteins GNAS nor GNAL. Also acts as a guanine nucleotide exchange factor (GEF) for G alpha proteins by stimulating exchange of bound GDP for free GTP. This Danio rerio (Zebrafish) protein is Chaperone Ric-8A (ric8a).